We begin with the raw amino-acid sequence, 430 residues long: ATP-dependent RNA helicase RhlB (430 aa).

The Q motif motif lies at 9 to 37; the sequence is QKFSDFALHPQVIEALESKGFHNCTPIQA. The Helicase ATP-binding domain maps to 40-219; sequence LPLALSGRDV…FEQMNNAEYV (180 aa). 53–60 is an ATP binding site; sequence AQTGTGKT. Positions 165-168 match the DEAD box motif; that stretch reads DEAD. Positions 245 to 390 constitute a Helicase C-terminal domain; the sequence is RLLQTLLEEE…VSKYNSDALM (146 aa). A disordered region spans residues 392-430; that stretch reads DLPAPKRLTRPPRSNNGPRRHNNAPRRSGAPRNNRKRAD.

It belongs to the DEAD box helicase family. RhlB subfamily. In terms of assembly, component of the RNA degradosome, which is a multiprotein complex involved in RNA processing and mRNA degradation.

Its subcellular location is the cytoplasm. The catalysed reaction is ATP + H2O = ADP + phosphate + H(+). Functionally, DEAD-box RNA helicase involved in RNA degradation. Has RNA-dependent ATPase activity and unwinds double-stranded RNA. This Pectobacterium carotovorum subsp. carotovorum (strain PC1) protein is ATP-dependent RNA helicase RhlB.